A 263-amino-acid chain; its full sequence is ABC transporter I family member 17 (263 aa).

Residues 29-260 form the ABC transporter domain; it reads IRVHDLTRVA…THPMAQRFLQ (232 aa). 62-69 is a binding site for ATP; it reads GPSGSGKS.

It belongs to the ABC transporter superfamily. ABCI family.

This is ABC transporter I family member 17 (ABCI17) from Arabidopsis thaliana (Mouse-ear cress).